Here is a 397-residue protein sequence, read N- to C-terminus: Tryptophan synthase beta chain 1 (397 aa).

K94 is subject to N6-(pyridoxal phosphate)lysine.

Belongs to the TrpB family. In terms of assembly, tetramer of two alpha and two beta chains. The cofactor is pyridoxal 5'-phosphate.

It carries out the reaction (1S,2R)-1-C-(indol-3-yl)glycerol 3-phosphate + L-serine = D-glyceraldehyde 3-phosphate + L-tryptophan + H2O. Its pathway is amino-acid biosynthesis; L-tryptophan biosynthesis; L-tryptophan from chorismate: step 5/5. In terms of biological role, the beta subunit is responsible for the synthesis of L-tryptophan from indole and L-serine. This is Tryptophan synthase beta chain 1 (trpB1) from Archaeoglobus fulgidus (strain ATCC 49558 / DSM 4304 / JCM 9628 / NBRC 100126 / VC-16).